The primary structure comprises 382 residues: 2-heptyl-3-hydroxy-4(1H)-quinolone synthase (382 aa).

This sequence belongs to the 3-hydroxybenzoate 6-hydroxylase family.

It carries out the reaction 2-heptyl-4(1H)-quinolone + NADH + O2 + H(+) = 2-heptyl-3-hydroxy-4(1H)-quinolone + NAD(+) + H2O. In terms of biological role, involved in the terminal step of the biosynthesis of quinolone which in addition to serve as a potent signal for quorum sensing, chelates iron and promotes the formation of membrane vesicles (MVs). Catalyzes the hydroxylation of 2-heptyl-4-quinolone (C7-HHQ) to yield 2-heptyl-3-hydroxy-4-quinolone (PQS). The protein is 2-heptyl-3-hydroxy-4(1H)-quinolone synthase (pqsH) of Pseudomonas aeruginosa (strain ATCC 15692 / DSM 22644 / CIP 104116 / JCM 14847 / LMG 12228 / 1C / PRS 101 / PAO1).